A 913-amino-acid chain; its full sequence is Polyribonucleotide nucleotidyltransferase (913 aa).

A disordered region spans residues 407–427 (YMHNYEMPPYSTGETGRVGSP). Residues Asp521 and Asp527 each contribute to the Mg(2+) site. Residues 587–646 (PRIITTSVPVEKIGEVIGPKGKMINQIQEDTGAEIAIEDDGTVFISSEGGEAAEKAKAII) enclose the KH domain. The S1 motif domain maps to 658-730 (GETYNGKVVK…DRGKISLAIP (73 aa)). The tract at residues 727-913 (LAIPGFEDQE…VRRDFDPFED (187 aa)) is disordered. Basic and acidic residues-rich tracts occupy residues 742 to 789 (SRGD…RRSD), 797 to 865 (DRPR…DRRG), and 872 to 898 (RGSDRNPRYATDDNYDDYRADREERTE).

The protein belongs to the polyribonucleotide nucleotidyltransferase family. It depends on Mg(2+) as a cofactor.

It is found in the cytoplasm. The enzyme catalyses RNA(n+1) + phosphate = RNA(n) + a ribonucleoside 5'-diphosphate. Involved in mRNA degradation. Catalyzes the phosphorolysis of single-stranded polyribonucleotides processively in the 3'- to 5'-direction. This is Polyribonucleotide nucleotidyltransferase from Bifidobacterium longum (strain DJO10A).